We begin with the raw amino-acid sequence, 229 residues long: UPF0173 metal-dependent hydrolase SAOUHSC_01815 (229 aa).

Belongs to the UPF0173 family.

The polypeptide is UPF0173 metal-dependent hydrolase SAOUHSC_01815 (Staphylococcus aureus (strain NCTC 8325 / PS 47)).